The sequence spans 397 residues: Oxysterol-binding protein homolog C354.07c (397 aa).

Asn-186 and Asn-195 each carry an N-linked (GlcNAc...) asparagine glycan.

Belongs to the OSBP family.

Its subcellular location is the endoplasmic reticulum. This chain is Oxysterol-binding protein homolog C354.07c, found in Schizosaccharomyces pombe (strain 972 / ATCC 24843) (Fission yeast).